The primary structure comprises 174 residues: Probable N-acetyltransferase Rv2775 (174 aa).

One can recognise an N-acetyltransferase domain in the interval 6–172 (IRIRAAKPID…VGYRLYRSAP (167 aa)).

Belongs to the acetyltransferase family.

The sequence is that of Probable N-acetyltransferase Rv2775 from Mycobacterium tuberculosis (strain ATCC 25618 / H37Rv).